Consider the following 479-residue polypeptide: U3 snoRNP-associated protein-like EMB2271 (479 aa).

A disordered region spans residues 1–73; it reads MKLEKKKGIG…AHETVGEKRK (73 aa). Over residues 8 to 17 the composition is skewed to basic residues; it reads GIGAKRRGKK. The span at 18 to 38 shows a compositional bias: basic and acidic residues; sequence SSIDHDPFLEEETEKRRKFNY. Residues 39–51 are compositionally biased toward acidic residues; the sequence is DDDDDIESVESEE. The segment covering 52–73 has biased composition (basic and acidic residues); sequence EGKVGEEVEDEFAHETVGEKRK. WD repeat units follow at residues 143–182, 204–243, 246–285, 288–326, 328–366, 386–425, and 431–471; these read KHQH…SDEY, RHNK…HVQA, GHCG…YIES, GHQS…RLIY, ASES…PVFI, PACS…SAIQ, and PLPG…QNGV.

This sequence belongs to the WD repeat RRP9 family.

The protein localises to the nucleus. The protein resides in the nucleolus. In terms of biological role, component of a nucleolar small nuclear ribonucleoprotein particle (snoRNP) thought to participate in the processing and modification of pre-ribosomal RNA. Essential for embryogenesis. May function during late embryogenesis. The sequence is that of U3 snoRNP-associated protein-like EMB2271 from Arabidopsis thaliana (Mouse-ear cress).